The sequence spans 764 residues: 5-methyltetrahydropteroyltriglutamate--homocysteine methyltransferase (764 aa).

5-methyltetrahydropteroyltri-L-glutamate is bound by residues 17–20 (RELK) and K117. L-homocysteine contacts are provided by residues 436 to 438 (IGS) and E489. L-methionine contacts are provided by residues 436–438 (IGS) and E489. 5-methyltetrahydropteroyltri-L-glutamate is bound by residues 520-521 (RC) and W566. D604 provides a ligand contact to L-homocysteine. D604 serves as a coordination point for L-methionine. E610 contacts 5-methyltetrahydropteroyltri-L-glutamate. Zn(2+) contacts are provided by H646, C648, and E670. H699 (proton donor) is an active-site residue. Position 731 (C731) interacts with Zn(2+).

The protein belongs to the vitamin-B12 independent methionine synthase family. Requires Zn(2+) as cofactor.

The catalysed reaction is 5-methyltetrahydropteroyltri-L-glutamate + L-homocysteine = tetrahydropteroyltri-L-glutamate + L-methionine. It functions in the pathway amino-acid biosynthesis; L-methionine biosynthesis via de novo pathway; L-methionine from L-homocysteine (MetE route): step 1/1. In terms of biological role, catalyzes the transfer of a methyl group from 5-methyltetrahydrofolate to homocysteine resulting in methionine formation. This Baumannia cicadellinicola subsp. Homalodisca coagulata protein is 5-methyltetrahydropteroyltriglutamate--homocysteine methyltransferase.